We begin with the raw amino-acid sequence, 618 residues long: Nuclear RNA export factor 1 (618 aa).

Positions 1–15 (MADEGKSYNEHDDRV) are enriched in basic and acidic residues. The interval 1-113 (MADEGKSYNE…RGGAGTSQDG (113 aa)) is disordered. The residue at position 2 (alanine 2) is an N-acetylalanine. Residues 2 to 59 (ADEGKSYNEHDDRVSFPQRRKKGRGPFRWKCGEGNRRSGRGGSGVQSSRFEEDDGDVA) are minor non-specific RNA-binding. The RNA-binding (RBD) stretch occupies residues 2 to 117 (ADEGKSYNEH…GTSQDGTTKN (116 aa)). The interaction with ALYREF/THOC4 and LUZP4 stretch occupies residues 2–197 (ADEGKSYNEH…IIINASAPPY (196 aa)). Residues 19–28 (QRRKKGRGPF) show a composition bias toward basic residues. Arginine 41 carries the post-translational modification Asymmetric dimethylarginine; alternate. Omega-N-methylarginine; alternate is present on arginine 41. The interval 60-117 (MNDPQDGPRVRYNPYTNRPNRRGDGWHDRDRIHITVRRDRAPAERGGAGTSQDGTTKN) is major non-specific RNA-binding. The RNA binding stretch occupies residues 60–117 (MNDPQDGPRVRYNPYTNRPNRRGDGWHDRDRIHITVRRDRAPAERGGAGTSQDGTTKN). The short motif at 66 to 99 (GPRVRYNPYTNRPNRRGDGWHDRDRIHITVRRDR) is the Nuclear localization signal element. The segment covering 80–102 (RRGDGWHDRDRIHITVRRDRAPA) has biased composition (basic and acidic residues). Positions 82–109 (GDGWHDRDRIHITVRRDRAPAERGGAGT) match the Nuclear export signal motif. The RRM domain occupies 118-197 (WFKITIPYGR…IIINASAPPY (80 aa)). Residue tyrosine 125 is modified to 3'-nitrotyrosine. LRR repeat units follow at residues 265–290 (ELLS…QKAP), 291–314 (NLKT…IKGL), 315–342 (KLEE…AIRE), and 343–370 (RFPK…TMLP). One can recognise an NTF2 domain in the interval 385-535 (LVLRFLQQYY…LCIVNDELFV (151 aa)). Residues 564–618 (PEQQEMLQAFSTQSGMNLEWSQKCLQDNNWDYTRSAQAFTLLKAKGEIPEVAFMK) form the TAP-C domain.

The protein belongs to the NXF family. In terms of assembly, heterodimer (via NTF2 domain) with NXT1. The formation of NXF1-NXT1 heterodimers is required for the NXF1-mediated nuclear mRNA export. Forms a complex with RANBP2/NUP358, NXT1 and RANGAP1. Associates with the exon junction complex (EJC). Associates with the transcription/export (TREX) complex. Found in a mRNA complex with UPF3A and UPF3B. Found in a post-splicing complex with RBM8A, UPF1, UPF2, UPF3A, UPF3B and RNPS1. Interacts (via N-terminus) with DHX9 (via N-terminus); this interaction is direct and negatively regulates NXF1-mediated nuclear export of constitutive transport element (CTE)-containing cellular mRNAs. Interacts with FYTTD1/UIF. Interacts with EIF4A3. Interacts with NUP42. Interacts with ALYREF/THOC4. Interacts with CHTOP. Interacts with FRG1 (via N-terminus). Interacts with LUZP4. Interacts with FMR1; the interaction occurs in a mRNA-dependent and polyribosomes-independent manner in the nucleus. Interacts with CPSF6 (via N-terminus); this interaction is direct. Interacts with RBM15. Interacts with RBM15B. Interacts with MCM3AP; this interaction is not mediated by RNA. Interacts with DDX3X (via C-terminus); this interaction may be partly involved in DDX3X nuclear export and in NXF1 localization to stress granules. Interacts with PABPC1/PABP1. Expressed ubiquitously.

Its subcellular location is the nucleus. The protein localises to the nucleoplasm. The protein resides in the nucleus speckle. It localises to the cytoplasm. It is found in the nuclear pore complex. Its subcellular location is the nucleus envelope. The protein localises to the stress granule. Functionally, involved in the nuclear export of mRNA species bearing retroviral constitutive transport elements (CTE) and in the export of mRNA from the nucleus to the cytoplasm (TAP/NFX1 pathway). The NXF1-NXT1 heterodimer is involved in the export of HSP70 mRNA in conjunction with ALYREF/THOC4 and THOC5 components of the TREX complex. ALYREF/THOC4-bound mRNA is thought to be transferred to the NXF1-NXT1 heterodimer for export. Also involved in nuclear export of m6A-containing mRNAs: interaction between SRSF3 and YTHDC1 facilitates m6A-containing mRNA-binding to both SRSF3 and NXF1, promoting mRNA nuclear export. This chain is Nuclear RNA export factor 1 (Nxf1), found in Mus musculus (Mouse).